A 195-amino-acid chain; its full sequence is Probable GTP-binding protein EngB (195 aa).

One can recognise an EngB-type G domain in the interval 24–195 (DWPEIALAGR…EAWTAILKYL (172 aa)). GTP contacts are provided by residues 32 to 39 (GRSNVGKS), 59 to 63 (GKTQL), 77 to 80 (DVPG), 144 to 147 (TKAD), and 176 to 178 (FSS). Positions 39 and 61 each coordinate Mg(2+).

It belongs to the TRAFAC class TrmE-Era-EngA-EngB-Septin-like GTPase superfamily. EngB GTPase family. The cofactor is Mg(2+).

Functionally, necessary for normal cell division and for the maintenance of normal septation. The sequence is that of Probable GTP-binding protein EngB from Lactococcus lactis subsp. cremoris (strain MG1363).